A 185-amino-acid polypeptide reads, in one-letter code: uncharacterized protein (185 aa).

This is an uncharacterized protein from Haemophilus influenzae (strain ATCC 51907 / DSM 11121 / KW20 / Rd).